The chain runs to 261 residues: Zinc import ATP-binding protein ZnuC (261 aa).

The ABC transporter domain occupies 6 to 221 (IRLEQVGVTF…PAFVELFGKN (216 aa)). 38–45 (GPNGAGKT) lines the ATP pocket.

This sequence belongs to the ABC transporter superfamily. Zinc importer (TC 3.A.1.15.5) family. In terms of assembly, the complex is composed of two ATP-binding proteins (ZnuC), two transmembrane proteins (ZnuB) and a solute-binding protein (ZnuA).

The protein localises to the cell inner membrane. The enzyme catalyses Zn(2+)(out) + ATP(in) + H2O(in) = Zn(2+)(in) + ADP(in) + phosphate(in) + H(+)(in). In terms of biological role, part of the ABC transporter complex ZnuABC involved in zinc import. Responsible for energy coupling to the transport system. The protein is Zinc import ATP-binding protein ZnuC of Pseudomonas fluorescens (strain ATCC BAA-477 / NRRL B-23932 / Pf-5).